Reading from the N-terminus, the 736-residue chain is Factor of DNA methylation 4 (736 aa).

Basic and acidic residues-rich tracts occupy residues 80 to 90 and 144 to 167; these read RKYLRPRERPR and DSGRSGEERLKFSDKPDPFFSNED. The interval 80-167 is disordered; it reads RKYLRPRERP…KPDPFFSNED (88 aa). A coiled-coil region spans residues 360 to 597; it reads TLVSNLENTL…RSMRELTTRA (238 aa).

Acts in association with FDM3 and FDM5 for RNA-directed DNA methylation (RdDM). This chain is Factor of DNA methylation 4, found in Arabidopsis thaliana (Mouse-ear cress).